The chain runs to 118 residues: Small ribosomal subunit protein uS13 (118 aa).

The tract at residues 94-118 (GLPVRGQRTQTNARTRKGPRRLARK) is disordered. Positions 107–118 (RTRKGPRRLARK) are enriched in basic residues.

It belongs to the universal ribosomal protein uS13 family. Part of the 30S ribosomal subunit. Forms a loose heterodimer with protein S19. Forms two bridges to the 50S subunit in the 70S ribosome.

Located at the top of the head of the 30S subunit, it contacts several helices of the 16S rRNA. In the 70S ribosome it contacts the 23S rRNA (bridge B1a) and protein L5 of the 50S subunit (bridge B1b), connecting the 2 subunits; these bridges are implicated in subunit movement. Contacts the tRNAs in the A and P-sites. In Nitrosococcus oceani (strain ATCC 19707 / BCRC 17464 / JCM 30415 / NCIMB 11848 / C-107), this protein is Small ribosomal subunit protein uS13.